The chain runs to 678 residues: Protein distal antenna (678 aa).

Residues 7 to 58 enclose the HTH psq-type domain; it reads TKGKRPLRSLTPRDKIHAIQRIHDGESKASVARDIGVPESTLRGWCKNEDKL. A DNA-binding region (H-T-H motif) is located at residues 34–54; sequence KASVARDIGVPESTLRGWCKN. 5 disordered regions span residues 232 to 310, 344 to 381, 445 to 528, 541 to 592, and 645 to 678; these read GAGN…GGPM, GVTS…PSGS, KETE…TSEC, GMEA…DEEE, and NETP…RRRK. Composition is skewed to polar residues over residues 241-254 and 349-363; these read PSGQ…SPRS and PIRS…QLAQ. Residues serine 251 and serine 254 each carry the phosphoserine modification. The span at 372–381 shows a compositional bias: low complexity; the sequence is LTPSSTPSGS. Residues 449–461 show a composition bias toward polar residues; the sequence is TPSVRSLSSNEQN. A compositionally biased stretch (acidic residues) spans 462–478; sequence PEADEATETDLDGEVEP. Residues 495 to 508 show a composition bias toward polar residues; it reads TPSQSPIAHSSGSR. Low complexity predominate over residues 570 to 586; sequence NNNDVSASNNNNNNNSN. Positions 657–667 are enriched in acidic residues; it reads EDSEEHAAEEE.

As to quaternary structure, homomers. Interacts with itself, danr, ey and dac to form a complex (or complexes) containing the RD factors. As to expression, coexpressed with danr in the presumptive distal antenna, but not in the leg imaginal disk. Both proteins are also expressed in the brain and the eye region of the eye-antenna disk. First detected in early L3 eye disks in cells surrounding the newly initiated MF. Levels are uniform and high anterior to the furrow, lower levels within and posterior to the furrow. Limited expression is seen in small groups of cells in leg and wing. These appear in the location of prominent sense organ progenitors at relatively late stages of disk development.

It localises to the nucleus. Probable transcription factor with a role in the retinal determination (RD) network. Regulates ato expression and is required for normal R8 induction and differentiation. Danr appears to repress Dan expression, but Dan is required for Danr expression anterior to the morphogenetic furrow (MF). Dan and Danr lie downstream of so and require dac function for highest levels of expression. Contributes to differentiation of antenna-specific characteristics; effector gene that acts downstream of homothorax (hth), Distal-less (Dll), cut (ct) and spineless (ss) genes to control differentiation of distal antennal structures. This Drosophila melanogaster (Fruit fly) protein is Protein distal antenna.